The primary structure comprises 938 residues: ATP-dependent 6-phosphofructokinase subunit beta (938 aa).

The interval 1 to 552 is N-terminal catalytic PFK domain 1; sequence MTQSLPLLNG…HLDNFMAINS (552 aa). ATP-binding positions include Gly-185, 249–250, and 279–282; these read RC and GDGS. Asp-280 provides a ligand contact to Mg(2+). Beta-D-fructose 6-phosphate-binding positions include 325 to 327, Arg-362, 369 to 371, Glu-426, Arg-454, and 460 to 463; these read SID, MGR, and HVQR. Residue Asp-327 is the Proton acceptor of the active site. Residues 553–566 form an interdomain linker region; it reads ADHIEPKLPEHTHM. The interval 567–938 is C-terminal regulatory PFK domain 2; the sequence is KIAIVNVGAP…ADHLVGRKKL (372 aa). Residues Arg-637, 695 to 699, Arg-733, 740 to 742, Lys-826, 832 to 835, and Arg-915 each bind beta-D-fructose 2,6-bisphosphate; these read TLSNN, QGG, and HVQQ.

The protein belongs to the phosphofructokinase type A (PFKA) family. ATP-dependent PFK group I subfamily. Eukaryotic two domain clade 'E' sub-subfamily. Heterooctamer of 4 alpha and 4 beta chains. Mg(2+) is required as a cofactor.

Its subcellular location is the cytoplasm. The enzyme catalyses beta-D-fructose 6-phosphate + ATP = beta-D-fructose 1,6-bisphosphate + ADP + H(+). It functions in the pathway carbohydrate degradation; glycolysis; D-glyceraldehyde 3-phosphate and glycerone phosphate from D-glucose: step 3/4. Its activity is regulated as follows. Allosterically activated by ADP, AMP, or fructose 2,6-bisphosphate, and allosterically inhibited by ATP or citrate. Its function is as follows. Catalyzes the phosphorylation of D-fructose 6-phosphate to fructose 1,6-bisphosphate by ATP, the first committing step of glycolysis. The polypeptide is ATP-dependent 6-phosphofructokinase subunit beta (PFK2) (Kluyveromyces lactis (strain ATCC 8585 / CBS 2359 / DSM 70799 / NBRC 1267 / NRRL Y-1140 / WM37) (Yeast)).